The following is a 34-amino-acid chain: Photosystem I reaction center subunit XII (34 aa).

The chain crosses the membrane as a helical span at residues 11–31 (VAIAFVVALIAGIAALLLSTA).

The protein belongs to the PsaM family. In terms of assembly, the G.violaceus PSI reaction center is composed of one copy each of PsaA,B,C,D,E,F,L,M and Z, and forms trimeric complexes.

Its subcellular location is the cell inner membrane. The polypeptide is Photosystem I reaction center subunit XII (Gloeobacter violaceus (strain ATCC 29082 / PCC 7421)).